Here is a 91-residue protein sequence, read N- to C-terminus: Small ribosomal subunit protein bS20 (91 aa).

Residues 72-91 (KNAASRQKSRLAKKLNGLSA) are disordered.

Belongs to the bacterial ribosomal protein bS20 family.

Its function is as follows. Binds directly to 16S ribosomal RNA. In Halalkalibacterium halodurans (strain ATCC BAA-125 / DSM 18197 / FERM 7344 / JCM 9153 / C-125) (Bacillus halodurans), this protein is Small ribosomal subunit protein bS20.